The primary structure comprises 118 residues: MSEVMDYKSRLSDPASRKFETFSYLPAMNAADIRKQVEYLVSKGWNPAIEHTEPEHLMDSYWYMWKLPMFGETDIDRILGEAEACHKANPNNHVRLVGYDNFAQSQGAAMVIYRGKTV.

The protein belongs to the RuBisCO small chain family. In terms of assembly, heterohexadecamer of 8 large and 8 small subunits.

Its function is as follows. RuBisCO catalyzes two reactions: the carboxylation of D-ribulose 1,5-bisphosphate, the primary event in carbon dioxide fixation, as well as the oxidative fragmentation of the pentose substrate. Both reactions occur simultaneously and in competition at the same active site. Although the small subunit is not catalytic it is essential for maximal activity. The chain is Ribulose bisphosphate carboxylase small subunit from Thiobacillus denitrificans (strain ATCC 25259 / T1).